The following is a 744-amino-acid chain: C-type polyheme cytochrome OmcB (744 aa).

Positions 1–23 (MSRKVTKYSAVLAVSLFAAALAG) are cleaved as a signal peptide. C24 is lipidated: N-palmitoyl cysteine. The S-diacylglycerol cysteine moiety is linked to residue C24. The heme c site is built by C48, C51, H52, C81, C84, H85, C107, C110, H111, C141, C144, H145, C185, C188, H189, C225, C228, H229, C303, C306, H307, C382, C385, H386, C430, C433, H434, C480, C483, H484, C555, C558, H559, C587, C590, and H591.

Post-translationally, binds 12 heme c groups per subunit.

It is found in the cell outer membrane. Involved in anaerobic respiration with Fe(3+) as terminal electron acceptor. Acts as an electron-transport mediator in the dissimilatory reduction of Fe(3+). The sequence is that of C-type polyheme cytochrome OmcB (omcB) from Geobacter sulfurreducens (strain DL-1 / KN400).